A 194-amino-acid chain; its full sequence is MGQRVAEVQRKTKETDIKLILNIDGNGDYKISTGIGFFDHMLQLFSHHGKFDIDLEAKGDIYIDDHHTIEDVGIVLGQAFLKALSDKRGIKRYAHVILPMDEALIMVAVDISGRPYLAFDVDFKLPKLGDMTSQMVVEFFKAFVWSSKTTVHIKKLAGENDHHVCEAIFKAIGRTLKEACTIIDDRIPSSKGVL.

It belongs to the imidazoleglycerol-phosphate dehydratase family.

It localises to the cytoplasm. The enzyme catalyses D-erythro-1-(imidazol-4-yl)glycerol 3-phosphate = 3-(imidazol-4-yl)-2-oxopropyl phosphate + H2O. The protein operates within amino-acid biosynthesis; L-histidine biosynthesis; L-histidine from 5-phospho-alpha-D-ribose 1-diphosphate: step 6/9. The chain is Imidazoleglycerol-phosphate dehydratase from Caldicellulosiruptor bescii (strain ATCC BAA-1888 / DSM 6725 / KCTC 15123 / Z-1320) (Anaerocellum thermophilum).